The sequence spans 209 residues: Small ribosomal subunit protein uS4 (209 aa).

The tract at residues 22-45 (RGRNPLLRKPNPPGQHGMQRKKKS) is disordered. Residues 93-154 (CRLDNIVYRL…KSRRLAIVTE (62 aa)) form the S4 RNA-binding domain.

The protein belongs to the universal ribosomal protein uS4 family. Part of the 30S ribosomal subunit. Contacts protein S5. The interaction surface between S4 and S5 is involved in control of translational fidelity.

Its function is as follows. One of the primary rRNA binding proteins, it binds directly to 16S rRNA where it nucleates assembly of the body of the 30S subunit. Functionally, with S5 and S12 plays an important role in translational accuracy. The chain is Small ribosomal subunit protein uS4 from Chlamydia muridarum (strain MoPn / Nigg).